Here is a 710-residue protein sequence, read N- to C-terminus: Dual specificity protein kinase shkE (710 aa).

Low complexity-rich tracts occupy residues 83 to 94 (DVSDSNNNNSTS), 107 to 129 (NNNN…NNNN), and 197 to 208 (QKQQQSQASIQQ). Disordered regions lie at residues 83–136 (DVSD…PTVI) and 189–232 (QHLT…IPPE). A Protein kinase domain is found at 237–495 (DVKTDLLGGG…EVTQRMNEVL (259 aa)). ATP-binding positions include 243–251 (LGGGAYGKV) and K264. D359 functions as the Proton acceptor in the catalytic mechanism. The SH2 domain maps to 597–707 (WFHFDISRDI…CPITEIKVPY (111 aa)).

This sequence belongs to the protein kinase superfamily. Ser/Thr protein kinase family. SH2 domain-containing protein kinase subfamily.

Its subcellular location is the membrane. The enzyme catalyses L-seryl-[protein] + ATP = O-phospho-L-seryl-[protein] + ADP + H(+). It carries out the reaction L-threonyl-[protein] + ATP = O-phospho-L-threonyl-[protein] + ADP + H(+). Functionally, required for proper chemotaxis and phagocytosis; proper spatiotemporal control of F-actin levels in chemotaxing cells. Negative regulator of the PI3K (phosphatidylinositol 3 kinase) pathway. Predominantly phosphorylates serines and threonines and tyrosines at a lower level. In Dictyostelium discoideum (Social amoeba), this protein is Dual specificity protein kinase shkE (shkE).